A 62-amino-acid chain; its full sequence is Large ribosomal subunit protein bL33 (62 aa).

It belongs to the bacterial ribosomal protein bL33 family.

In Bacteroides fragilis (strain ATCC 25285 / DSM 2151 / CCUG 4856 / JCM 11019 / LMG 10263 / NCTC 9343 / Onslow / VPI 2553 / EN-2), this protein is Large ribosomal subunit protein bL33.